Consider the following 244-residue polypeptide: 23S rRNA (guanosine-2'-O-)-methyltransferase RlmB (244 aa).

Residues G196, I216, and L225 each contribute to the S-adenosyl-L-methionine site.

This sequence belongs to the class IV-like SAM-binding methyltransferase superfamily. RNA methyltransferase TrmH family. RlmB subfamily. Homodimer.

The protein localises to the cytoplasm. It catalyses the reaction guanosine(2251) in 23S rRNA + S-adenosyl-L-methionine = 2'-O-methylguanosine(2251) in 23S rRNA + S-adenosyl-L-homocysteine + H(+). Functionally, specifically methylates the ribose of guanosine 2251 in 23S rRNA. The chain is 23S rRNA (guanosine-2'-O-)-methyltransferase RlmB from Photorhabdus laumondii subsp. laumondii (strain DSM 15139 / CIP 105565 / TT01) (Photorhabdus luminescens subsp. laumondii).